The chain runs to 234 residues: MPTPHIEAQKGEIADKILLPGDPLRAKFIAENFLEDAVQFNQVRGMLGFTGTYKGHRVSVMGTGMGIPSISIYANELITEYGVKRLIRVGTAGSVNEDVHIRDLVIGQAAATTSAIVRHDFPDFDFPQIADFDLLDKAYHIAKDLGITTHVGNILSSDLFYGGPDAVKVGKLGVKAVEMEAAGLYYLGAKYKVQTLGIMTISDHILTGESTTSEERQLTFTDMMKVGLETLIAE.

Residue His-5 coordinates a purine D-ribonucleoside. Phosphate-binding positions include Gly-21, Arg-25, Arg-44, and 88 to 91 (RVGT). Residues 178 to 180 (EME) and 202 to 203 (SD) each bind a purine D-ribonucleoside. Residue Asp-203 is the Proton donor of the active site.

The protein belongs to the PNP/UDP phosphorylase family. In terms of assembly, homohexamer; trimer of homodimers.

It catalyses the reaction a purine D-ribonucleoside + phosphate = a purine nucleobase + alpha-D-ribose 1-phosphate. The enzyme catalyses a purine 2'-deoxy-D-ribonucleoside + phosphate = a purine nucleobase + 2-deoxy-alpha-D-ribose 1-phosphate. Catalyzes the reversible phosphorolytic breakdown of the N-glycosidic bond in the beta-(deoxy)ribonucleoside molecules, with the formation of the corresponding free purine bases and pentose-1-phosphate. In Lactococcus lactis subsp. cremoris (strain MG1363), this protein is Purine nucleoside phosphorylase DeoD-type.